Consider the following 77-residue polypeptide: U14-theraphotoxin-Cg1a 3 (77 aa).

A signal peptide spans 1-21 (MKTSVLLVILGIAAITVQCTA). A propeptide spanning residues 22–49 (SESVEQDSLRTFVDTVLGWNAEMASEAR) is cleaved from the precursor. Intrachain disulfides connect Cys-50–Cys-64, Cys-57–Cys-69, and Cys-63–Cys-75. Lys-77 is modified (lysine amide).

This sequence belongs to the neurotoxin 10 (Hwtx-1) family. 65 (Jztx-21) subfamily. As to expression, expressed by the venom gland.

It localises to the secreted. Its function is as follows. Probable ion channel inhibitor. The polypeptide is U14-theraphotoxin-Cg1a 3 (Chilobrachys guangxiensis (Chinese earth tiger tarantula)).